A 251-amino-acid chain; its full sequence is MRRPMVAGNWKMHGTRASVAELINGLRHLALPSGVDVAVFPPCLYINQVIDGLKGKSISVGAQNSAVESMQGALTGEIAPSQLVDAGCSLVLVGHSERRQIMGERDGMLNRKFAAAQACGLIPVLCVGETLEQREAGKTLEVVGRQLGSIIEELGVGAFANAVIAYEPVWAIGTGLTATPQQAQDVHKAIREQLAAENSEVARGVRLLYGGSVKAANAVELFGMPDIDGGLIGGASLNADEFGAICRAAGN.

Substrate is bound at residue Asn9–Lys11. His95 (electrophile) is an active-site residue. The active-site Proton acceptor is the Glu167. Substrate-binding positions include Gly173, Ser212, and Gly233 to Gly234.

This sequence belongs to the triosephosphate isomerase family. In terms of assembly, homodimer.

It is found in the cytoplasm. The enzyme catalyses D-glyceraldehyde 3-phosphate = dihydroxyacetone phosphate. It functions in the pathway carbohydrate biosynthesis; gluconeogenesis. The protein operates within carbohydrate degradation; glycolysis; D-glyceraldehyde 3-phosphate from glycerone phosphate: step 1/1. In terms of biological role, involved in the gluconeogenesis. Catalyzes stereospecifically the conversion of dihydroxyacetone phosphate (DHAP) to D-glyceraldehyde-3-phosphate (G3P). The protein is Triosephosphate isomerase of Pseudomonas fluorescens (strain Pf0-1).